The sequence spans 208 residues: High frequency lysogenization protein HflD homolog (208 aa).

The protein belongs to the HflD family.

The protein localises to the cytoplasm. Its subcellular location is the cell inner membrane. This chain is High frequency lysogenization protein HflD homolog, found in Yersinia enterocolitica serotype O:8 / biotype 1B (strain NCTC 13174 / 8081).